The sequence spans 462 residues: Alkaline phosphatase 3 (462 aa).

The first 32 residues, methionine 1–alanine 32, serve as a signal peptide directing secretion. A Mg(2+)-binding site is contributed by aspartate 52. A Zn(2+)-binding site is contributed by aspartate 52. The active-site Phosphoserine intermediate is serine 101. Mg(2+) is bound by residues threonine 154 and glutamate 275. Zn(2+)-binding residues include aspartate 280, histidine 284, aspartate 322, histidine 323, and histidine 419.

The protein belongs to the alkaline phosphatase family. In terms of assembly, monomer. The cofactor is Mg(2+). Requires Zn(2+) as cofactor.

The enzyme catalyses a phosphate monoester + H2O = an alcohol + phosphate. This is Alkaline phosphatase 3 (phoB) from Bacillus subtilis (strain 168).